We begin with the raw amino-acid sequence, 230 residues long: Demethylmenaquinone methyltransferase (230 aa).

Residues threonine 62, aspartate 80, 102–103, and serine 119 each bind S-adenosyl-L-methionine; that span reads DG.

Belongs to the class I-like SAM-binding methyltransferase superfamily. MenG/UbiE family.

The catalysed reaction is a 2-demethylmenaquinol + S-adenosyl-L-methionine = a menaquinol + S-adenosyl-L-homocysteine + H(+). It participates in quinol/quinone metabolism; menaquinone biosynthesis; menaquinol from 1,4-dihydroxy-2-naphthoate: step 2/2. In terms of biological role, methyltransferase required for the conversion of demethylmenaquinol (DMKH2) to menaquinol (MKH2). The protein is Demethylmenaquinone methyltransferase of Streptomyces griseus subsp. griseus (strain JCM 4626 / CBS 651.72 / NBRC 13350 / KCC S-0626 / ISP 5235).